The following is a 166-amino-acid chain: Regulatory protein RecX (166 aa).

This sequence belongs to the RecX family.

Its subcellular location is the cytoplasm. Functionally, modulates RecA activity. The chain is Regulatory protein RecX from Klebsiella pneumoniae subsp. pneumoniae (strain ATCC 700721 / MGH 78578).